The following is a 264-amino-acid chain: MEDVQNSPAQVAMPIDRVGVKNLQLPLVVSDRAQGRQHTVATVDIGVDLPAHFKGTHMSRFVEALENWTEELDYASMKRLLEDVKTRLEARKAYVLFRFPYFIRKKAPATGSPGLVCYQCRLTGELEEGRPSFLLEVEVPVMTVCPCSKAISDEGAHSQRAVVRIAVRMTRFSWLEEFIDLAEVSGSSPVYTLLKREDEKYVTEDAFAHPTFVEDVVRAAAQRLERHPQISWFRVEVESFESIHCHNAFASIERTITPETQPGS.

This sequence belongs to the GTP cyclohydrolase IV family.

It catalyses the reaction GTP + H2O = 7,8-dihydroneopterin 3'-triphosphate + formate + H(+). It functions in the pathway cofactor biosynthesis; 7,8-dihydroneopterin triphosphate biosynthesis; 7,8-dihydroneopterin triphosphate from GTP: step 1/1. Converts GTP to 7,8-dihydroneopterin triphosphate. The sequence is that of GTP cyclohydrolase FolE2 from Nitratidesulfovibrio vulgaris (strain ATCC 29579 / DSM 644 / CCUG 34227 / NCIMB 8303 / VKM B-1760 / Hildenborough) (Desulfovibrio vulgaris).